The primary structure comprises 1392 residues: FERM and PDZ domain-containing protein 2 (1392 aa).

Residues 15–197 enclose the KIND domain; that stretch reads VTLASALQVR…SEVERRVVEE (183 aa). Positions 211–246 are disordered; it reads SRLHQADGESPGAPASDALQPRRVSERSAETQSSLE. In terms of domain architecture, FERM spans 342–642; that stretch reads CVVLLNGRCL…WFNAQTGSKH (301 aa). The PDZ 1 domain maps to 775 to 861; it reads GLFGEPNQDI…MAVRMIQNSP (87 aa). A disordered region spans residues 903 to 930; sequence GRQSPHIHDQDRSVRGTEMAQGAGSCPP. Over residues 908 to 917 the composition is skewed to basic and acidic residues; it reads HIHDQDRSVR. Residues 937-1027 form an interaction with GRIN2A and GRIN2B region; sequence TGEIYFVELV…VARLVLERRG (91 aa). PDZ domains follow at residues 950-1035 and 1079-1167; these read GTLG…PQCP and RGLG…PEME. Positions 1186–1236 are disordered; that stretch reads CAGSEQSPSLDQEDNWRDSTSLDAGEGLSPGPESSYKDVRQVKGDREKERP. A compositionally biased stretch (basic and acidic residues) spans 1220 to 1236; the sequence is SYKDVRQVKGDREKERP.

As to quaternary structure, interacts (via the second PDZ domain) with CTNND2 (via the extreme C-terminus). Interacts (via the second PDZ domain) with PKP4 (via the extreme C-terminus); the interaction directs FRMPD2 to the basolateral membranes. Interacts (via the second PDZ domain) with ARVCF (via the extreme C-terminus). Interacts (via the second PDZ domain) with NMDAR subunits GRIN2A/GLUN2A and GRIN2B/GLUN2B (via the extreme C-terminus); the interaction is direct and is likely to promote NMDAR-mediated neural signal transmission. Binds GRIN2A with lower affinity than GRIN2B. Interacts (via the third PDZ domain) with LRIT1 (via the extreme C-terminus); the interaction leads to their colocalization in photoreceptor synapses. Interacts with NOD2; the interaction is likely to trigger NOD2-mediated nuclear factor kappaB activation.

Its subcellular location is the cytoplasm. The protein localises to the postsynaptic density. It localises to the basolateral cell membrane. It is found in the cell junction. The protein resides in the tight junction. Functionally, functions as a scaffold protein and likely plays a role in N-methyl-D-aspartic acid receptor (NMDAR)-mediated synaptic excitatory transmission. May be involved in synapse formation in cone photoreceptor cells. May play a role in the regulation of tight junction formation. Binds phosphatidylinositol 3,4-bisphosphate (PtdIns(3,4)P2). May pNF-kappa-Blay a role in the regulation of NOD2-mediated NF-kappa-B activation in immune response. The chain is FERM and PDZ domain-containing protein 2 from Mus musculus (Mouse).